Consider the following 324-residue polypeptide: Acetyl-coenzyme A carboxylase carboxyl transferase subunit alpha (324 aa).

Residues 42-296 (RLSELEEEVY…EKALTRLAEK (255 aa)) form the CoA carboxyltransferase C-terminal domain.

This sequence belongs to the AccA family. Acetyl-CoA carboxylase is a heterohexamer composed of biotin carboxyl carrier protein (AccB), biotin carboxylase (AccC) and two subunits each of ACCase subunit alpha (AccA) and ACCase subunit beta (AccD).

It localises to the cytoplasm. The catalysed reaction is N(6)-carboxybiotinyl-L-lysyl-[protein] + acetyl-CoA = N(6)-biotinyl-L-lysyl-[protein] + malonyl-CoA. It participates in lipid metabolism; malonyl-CoA biosynthesis; malonyl-CoA from acetyl-CoA: step 1/1. Functionally, component of the acetyl coenzyme A carboxylase (ACC) complex. First, biotin carboxylase catalyzes the carboxylation of biotin on its carrier protein (BCCP) and then the CO(2) group is transferred by the carboxyltransferase to acetyl-CoA to form malonyl-CoA. The protein is Acetyl-coenzyme A carboxylase carboxyl transferase subunit alpha of Shouchella clausii (strain KSM-K16) (Alkalihalobacillus clausii).